The primary structure comprises 50 residues: uncharacterized protein (50 aa).

This is an uncharacterized protein from Dictyostelium discoideum (Social amoeba).